Here is a 666-residue protein sequence, read N- to C-terminus: Putative cysteine-rich receptor-like protein kinase 20 (666 aa).

The N-terminal stretch at 1 to 23 is a signal peptide; the sequence is MSSLICFIFLFLFSFITSFTASA. Residues 24 to 264 lie on the Extracellular side of the membrane; the sequence is QNPFYLYHNC…PRPGKGGNSS (241 aa). Gnk2-homologous domains are found at residues 27 to 131 and 137 to 241; these read FYLY…NRNI and TDGG…NYEF. N-linked (GlcNAc...) asparagine glycosylation is found at asparagine 32, asparagine 42, asparagine 60, asparagine 69, and asparagine 103. N-linked (GlcNAc...) asparagine glycosylation is present at asparagine 262. A helical transmembrane segment spans residues 265–285; it reads VIVIAVVVPITVLFLLFVAFF. The Cytoplasmic portion of the chain corresponds to 286 to 666; sequence SVRRAKRKKT…EASITSVAPR (381 aa). The Protein kinase domain maps to 344 to 623; the sequence is FLPINKLGQG…QMLTTSSIAL (280 aa). ATP contacts are provided by residues 350–358 and lysine 372; that span reads LGQGGFGEV. Tyrosine 417 is subject to Phosphotyrosine. Aspartate 469 serves as the catalytic Proton acceptor. Position 509 is a phosphothreonine (threonine 509). Tyrosine 517 bears the Phosphotyrosine mark.

Belongs to the protein kinase superfamily. Ser/Thr protein kinase family. CRK subfamily.

The protein localises to the membrane. The catalysed reaction is L-seryl-[protein] + ATP = O-phospho-L-seryl-[protein] + ADP + H(+). It carries out the reaction L-threonyl-[protein] + ATP = O-phospho-L-threonyl-[protein] + ADP + H(+). The polypeptide is Putative cysteine-rich receptor-like protein kinase 20 (CRK20) (Arabidopsis thaliana (Mouse-ear cress)).